A 394-amino-acid chain; its full sequence is Phosphopentomutase (394 aa).

The Mn(2+) site is built by Asp-13, Asp-286, His-291, Asp-327, His-328, and His-339.

This sequence belongs to the phosphopentomutase family. The cofactor is Mn(2+).

It localises to the cytoplasm. It catalyses the reaction 2-deoxy-alpha-D-ribose 1-phosphate = 2-deoxy-D-ribose 5-phosphate. The catalysed reaction is alpha-D-ribose 1-phosphate = D-ribose 5-phosphate. Its pathway is carbohydrate degradation; 2-deoxy-D-ribose 1-phosphate degradation; D-glyceraldehyde 3-phosphate and acetaldehyde from 2-deoxy-alpha-D-ribose 1-phosphate: step 1/2. Its function is as follows. Isomerase that catalyzes the conversion of deoxy-ribose 1-phosphate (dRib-1-P) and ribose 1-phosphate (Rib-1-P) to deoxy-ribose 5-phosphate (dRib-5-P) and ribose 5-phosphate (Rib-5-P), respectively. This Bacillus thuringiensis (strain Al Hakam) protein is Phosphopentomutase.